A 175-amino-acid chain; its full sequence is Di-N-acetylchitobiase (175 aa).

An N-terminal signal peptide occupies residues 1–38 (MARLQLAGSRRLVPLPRRAPRLAPLLLPLLLALPDGAR). The GH18 domain occupies 39–175 (ADCPCKVPAL…SFHHEIKGSQ (137 aa)). N115 is a glycosylation site (N-linked (GlcNAc...) asparagine). The Proton donor role is filled by E143.

Belongs to the glycosyl hydrolase 18 family.

Its subcellular location is the lysosome. In terms of biological role, involved in the degradation of asparagine-linked glycoproteins. Hydrolyze of N-acetyl-beta-D-glucosamine (1-4)N-acetylglucosamine chitobiose core from the reducing end of the bond, it requires prior cleavage by glycosylasparaginase. In Bos taurus (Bovine), this protein is Di-N-acetylchitobiase (CTBS).